The following is a 736-amino-acid chain: Microtubule-associated protein mu-2 (736 aa).

It belongs to the orthoreovirus mu-2 protein family. As to quaternary structure, interacts with protein mu-NS; in viral inclusions. Interacts with polymerase lambda-3; this interaction stimulates the ATPase activity of mu-2. It depends on a divalent metal cation as a cofactor.

It localises to the virion. The protein resides in the host cytoplasm. Its subcellular location is the host cytoskeleton. In terms of biological role, minor inner capsid (core) component. Displays NTPase and RNA 5'-triphosphatase (RTPase) activities. ATP is the preferred substrate for hydrolysis. May function as a cofactor of polymerase lambda-3. Associates with microtubules and plays a role in the formation, structural organization and morphology of viral inclusions, where the assembly of cores and the replication of viral RNA occur. Together with mu-NS, recruits the other core proteins to these inclusions. This chain is Microtubule-associated protein mu-2 (M1), found in Mammalia (T3D).